Reading from the N-terminus, the 555-residue chain is Dihydroxy-acid dehydratase (555 aa).

Asp78 contributes to the Mg(2+) binding site. Cys119 is a binding site for [2Fe-2S] cluster. Residues Asp120 and Lys121 each contribute to the Mg(2+) site. N6-carboxylysine is present on Lys121. Cys191 contributes to the [2Fe-2S] cluster binding site. Glu444 serves as a coordination point for Mg(2+). Ser470 functions as the Proton acceptor in the catalytic mechanism.

It belongs to the IlvD/Edd family. Homodimer. Requires [2Fe-2S] cluster as cofactor. Mg(2+) is required as a cofactor.

It carries out the reaction (2R)-2,3-dihydroxy-3-methylbutanoate = 3-methyl-2-oxobutanoate + H2O. The enzyme catalyses (2R,3R)-2,3-dihydroxy-3-methylpentanoate = (S)-3-methyl-2-oxopentanoate + H2O. The protein operates within amino-acid biosynthesis; L-isoleucine biosynthesis; L-isoleucine from 2-oxobutanoate: step 3/4. Its pathway is amino-acid biosynthesis; L-valine biosynthesis; L-valine from pyruvate: step 3/4. Functions in the biosynthesis of branched-chain amino acids. Catalyzes the dehydration of (2R,3R)-2,3-dihydroxy-3-methylpentanoate (2,3-dihydroxy-3-methylvalerate) into 2-oxo-3-methylpentanoate (2-oxo-3-methylvalerate) and of (2R)-2,3-dihydroxy-3-methylbutanoate (2,3-dihydroxyisovalerate) into 2-oxo-3-methylbutanoate (2-oxoisovalerate), the penultimate precursor to L-isoleucine and L-valine, respectively. The sequence is that of Dihydroxy-acid dehydratase from Nitratidesulfovibrio vulgaris (strain DSM 19637 / Miyazaki F) (Desulfovibrio vulgaris).